The following is a 581-amino-acid chain: Arginine--tRNA ligase (581 aa).

The 'HIGH' region signature appears at 122 to 132 (PNVAKPMHVGH).

Belongs to the class-I aminoacyl-tRNA synthetase family. Monomer.

It localises to the cytoplasm. It carries out the reaction tRNA(Arg) + L-arginine + ATP = L-arginyl-tRNA(Arg) + AMP + diphosphate. The polypeptide is Arginine--tRNA ligase (Francisella tularensis subsp. tularensis (strain WY96-3418)).